The following is a 174-amino-acid chain: MTENALPLLSAIEWLPEPSPLLTASLLDWLLEADSMTRRFEAHCQKVTVNLLREAFISPEEIAAEAALLPPEKQYWLREIELCADGIPWLVARTLVPESTLVGPEQKLRQLGSVPLGRYLFASSSLTRDFIDVGQSAGLWARRSRLRLAGKPLLLTELFLPASPLYGSLAKENT.

Substrate contacts are provided by M36, R78, L116, and E157.

It belongs to the UbiC family. Monomer.

The protein resides in the cytoplasm. It catalyses the reaction chorismate = 4-hydroxybenzoate + pyruvate. Its pathway is cofactor biosynthesis; ubiquinone biosynthesis. Functionally, removes the pyruvyl group from chorismate, with concomitant aromatization of the ring, to provide 4-hydroxybenzoate (4HB) for the ubiquinone pathway. This Erwinia tasmaniensis (strain DSM 17950 / CFBP 7177 / CIP 109463 / NCPPB 4357 / Et1/99) protein is Chorismate pyruvate-lyase.